Here is a 298-residue protein sequence, read N- to C-terminus: Probable GTP 3',8-cyclase (298 aa).

The Radical SAM core domain occupies 4–221 (RYGREIRSFR…VFTRKFMQNR (218 aa)). Arginine 13 provides a ligand contact to GTP. Cysteine 20 and cysteine 24 together coordinate [4Fe-4S] cluster. Residue tyrosine 26 participates in S-adenosyl-L-methionine binding. Residue cysteine 27 participates in [4Fe-4S] cluster binding. Lysine 61 contacts GTP. Glycine 65 contacts S-adenosyl-L-methionine. Threonine 91 provides a ligand contact to GTP. Serine 115 provides a ligand contact to S-adenosyl-L-methionine. Lysine 152 is a binding site for GTP. Positions 243 and 246 each coordinate [4Fe-4S] cluster. 248–250 (RIR) is a binding site for GTP. Position 260 (cysteine 260) interacts with [4Fe-4S] cluster.

This sequence belongs to the radical SAM superfamily. MoaA family. It depends on [4Fe-4S] cluster as a cofactor.

It carries out the reaction GTP + AH2 + S-adenosyl-L-methionine = (8S)-3',8-cyclo-7,8-dihydroguanosine 5'-triphosphate + 5'-deoxyadenosine + L-methionine + A + H(+). Its pathway is cofactor biosynthesis; molybdopterin biosynthesis. In terms of biological role, catalyzes the cyclization of GTP to (8S)-3',8-cyclo-7,8-dihydroguanosine 5'-triphosphate. The sequence is that of Probable GTP 3',8-cyclase from Methanococcus maripaludis (strain C7 / ATCC BAA-1331).